Consider the following 500-residue polypeptide: ATP synthase subunit alpha (500 aa).

169–176 (GDRQTGKT) contacts ATP.

This sequence belongs to the ATPase alpha/beta chains family. As to quaternary structure, F-type ATPases have 2 components, CF(1) - the catalytic core - and CF(0) - the membrane proton channel. CF(1) has five subunits: alpha(3), beta(3), gamma(1), delta(1), epsilon(1). CF(0) has three main subunits: a(1), b(2) and c(9-12). The alpha and beta chains form an alternating ring which encloses part of the gamma chain. CF(1) is attached to CF(0) by a central stalk formed by the gamma and epsilon chains, while a peripheral stalk is formed by the delta and b chains.

It localises to the cell membrane. It carries out the reaction ATP + H2O + 4 H(+)(in) = ADP + phosphate + 5 H(+)(out). In terms of biological role, produces ATP from ADP in the presence of a proton gradient across the membrane. The alpha chain is a regulatory subunit. This Lactococcus lactis subsp. cremoris (strain SK11) protein is ATP synthase subunit alpha.